Consider the following 638-residue polypeptide: Phosphomethylpyrimidine synthase (638 aa).

Residues N243, M272, Y301, H337, 357 to 359 (SRG), 398 to 401 (DGLR), and E437 contribute to the substrate site. H441 is a binding site for Zn(2+). A substrate-binding site is contributed by Y464. H505 lines the Zn(2+) pocket. The [4Fe-4S] cluster site is built by C585, C588, and C593.

This sequence belongs to the ThiC family. Homodimer. It depends on [4Fe-4S] cluster as a cofactor.

It carries out the reaction 5-amino-1-(5-phospho-beta-D-ribosyl)imidazole + S-adenosyl-L-methionine = 4-amino-2-methyl-5-(phosphooxymethyl)pyrimidine + CO + 5'-deoxyadenosine + formate + L-methionine + 3 H(+). Its pathway is cofactor biosynthesis; thiamine diphosphate biosynthesis. Catalyzes the synthesis of the hydroxymethylpyrimidine phosphate (HMP-P) moiety of thiamine from aminoimidazole ribotide (AIR) in a radical S-adenosyl-L-methionine (SAM)-dependent reaction. In Azoarcus sp. (strain BH72), this protein is Phosphomethylpyrimidine synthase.